Consider the following 390-residue polypeptide: Transforming growth factor beta-1 proprotein (390 aa).

A signal peptide spans M1 to G29. The tract at residues L30–P74 is straightjacket domain. The arm domain stretch occupies residues E75–L271. 3 N-linked (GlcNAc...) asparagine glycosylation sites follow: N82, N136, and N176. Positions D226–D252 are bowtie tail. The short motif at R244–D246 is the Cell attachment site element. Cystine bridges form between C285–C294, C293–C356, C322–C387, and C326–C389.

The protein belongs to the TGF-beta family. In terms of assembly, homodimer; disulfide-linked. Interacts with the serine proteases, HTRA1 and HTRA3: the interaction with either inhibits TGFB1-mediated signaling and the HTRA protease activity is required for this inhibition. May interact with THSD4; this interaction may lead to sequestration by FBN1 microfibril assembly and attenuation of TGFB signaling. Interacts with CD109, DPT and ASPN. Interacts with EFEMP2. Interacts with TSKU; the interaction contributes to regulation of the hair cycle. Interacts with TGFBR3. Homodimer; disulfide-linked. Interacts with transforming growth factor beta-1 (TGF-beta-1) chain; interaction is non-covalent and maintains TGF-beta-1 in a latent state; each latency-associated peptide (LAP) monomer interacts with TGF-beta-1 in the other monomer. Interacts with LTBP1; leading to regulation of TGF-beta-1 activation. Interacts with LRRC32/GARP; leading to regulation of TGF-beta-1 activation on the surface of activated regulatory T-cells (Tregs). Interacts with LRRC33/NRROS; leading to regulation of TGF-beta-1 activation in macrophages and microglia. Interacts (via cell attachment site) with integrins ITGAV and ITGB6 (ITGAV:ITGB6), leading to release of the active TGF-beta-1. Interacts with NREP; the interaction results in a decrease in TGFB1 autoinduction. Interacts with HSP90AB1; inhibits latent TGFB1 activation. As to quaternary structure, homodimer; disulfide-linked. Interacts with TGF-beta receptors (TGFBR1 and TGFBR2), leading to signal transduction. In terms of processing, transforming growth factor beta-1 proprotein: The precursor proprotein is cleaved in the Golgi apparatus by FURIN to form Transforming growth factor beta-1 (TGF-beta-1) and Latency-associated peptide (LAP) chains, which remain non-covalently linked, rendering TGF-beta-1 inactive. Post-translationally, N-glycosylated. Deglycosylation leads to activation of Transforming growth factor beta-1 (TGF-beta-1); mechanisms triggering deglycosylation-driven activation of TGF-beta-1 are however unclear. As to expression, expressed in cardiomyocytes. Weakly expressed in the mammary glands, with a slight increase of expression following onset of involution.

It is found in the secreted. The protein resides in the extracellular space. Its subcellular location is the extracellular matrix. Its function is as follows. Transforming growth factor beta-1 proprotein: Precursor of the Latency-associated peptide (LAP) and Transforming growth factor beta-1 (TGF-beta-1) chains, which constitute the regulatory and active subunit of TGF-beta-1, respectively. Functionally, required to maintain the Transforming growth factor beta-1 (TGF-beta-1) chain in a latent state during storage in extracellular matrix. Associates non-covalently with TGF-beta-1 and regulates its activation via interaction with 'milieu molecules', such as LTBP1, LRRC32/GARP and LRRC33/NRROS, that control activation of TGF-beta-1. Interaction with LRRC33/NRROS regulates activation of TGF-beta-1 in macrophages and microglia. Interaction with LRRC32/GARP controls activation of TGF-beta-1 on the surface of activated regulatory T-cells (Tregs). Interaction with integrins (ITGAV:ITGB6 or ITGAV:ITGB8) results in distortion of the Latency-associated peptide chain and subsequent release of the active TGF-beta-1. In terms of biological role, multifunctional protein that regulates the growth and differentiation of various cell types and is involved in various processes, such as normal development, immune function, microglia function and responses to neurodegeneration. Activation into mature form follows different steps: following cleavage of the proprotein in the Golgi apparatus, Latency-associated peptide (LAP) and Transforming growth factor beta-1 (TGF-beta-1) chains remain non-covalently linked rendering TGF-beta-1 inactive during storage in extracellular matrix. At the same time, LAP chain interacts with 'milieu molecules', such as LTBP1, LRRC32/GARP and LRRC33/NRROS that control activation of TGF-beta-1 and maintain it in a latent state during storage in extracellular milieus. TGF-beta-1 is released from LAP by integrins (ITGAV:ITGB6 or ITGAV:ITGB8): integrin-binding to LAP stabilizes an alternative conformation of the LAP bowtie tail and results in distortion of the LAP chain and subsequent release of the active TGF-beta-1. Once activated following release of LAP, TGF-beta-1 acts by binding to TGF-beta receptors (TGFBR1 and TGFBR2), which transduce signal. While expressed by many cells types, TGF-beta-1 only has a very localized range of action within cell environment thanks to fine regulation of its activation by Latency-associated peptide chain (LAP) and 'milieu molecules'. Plays an important role in bone remodeling: acts as a potent stimulator of osteoblastic bone formation, causing chemotaxis, proliferation and differentiation in committed osteoblasts. Can promote either T-helper 17 cells (Th17) or regulatory T-cells (Treg) lineage differentiation in a concentration-dependent manner. At high concentrations, leads to FOXP3-mediated suppression of RORC and down-regulation of IL-17 expression, favoring Treg cell development. At low concentrations in concert with IL-6 and IL-21, leads to expression of the IL-17 and IL-23 receptors, favoring differentiation to Th17 cells. Stimulates sustained production of collagen through the activation of CREB3L1 by regulated intramembrane proteolysis (RIP). Mediates SMAD2/3 activation by inducing its phosphorylation and subsequent translocation to the nucleus. Positively regulates odontoblastic differentiation in dental papilla cells, via promotion of IPO7-mediated translocation of phosphorylated SMAD2 to the nucleus and subsequent transcription of target genes. Can induce epithelial-to-mesenchymal transition (EMT) and cell migration in various cell types. The polypeptide is Transforming growth factor beta-1 proprotein (Mus musculus (Mouse)).